Reading from the N-terminus, the 81-residue chain is RNA-binding protein Hfq (81 aa).

Residues 9–68 (DPYLNILRKERVPVSIFLVNGIKLQGQIESFDQFVILLKNTVSQMVYKHAISTVVPSRTI) form the Sm domain.

The protein belongs to the Hfq family. Homohexamer.

Its function is as follows. RNA chaperone that binds small regulatory RNA (sRNAs) and mRNAs to facilitate mRNA translational regulation in response to envelope stress, environmental stress and changes in metabolite concentrations. Also binds with high specificity to tRNAs. The sequence is that of RNA-binding protein Hfq from Marinomonas sp. (strain MWYL1).